Reading from the N-terminus, the 555-residue chain is NADH-ubiquinone oxidoreductase chain 5 (555 aa).

The next 15 membrane-spanning stretches (helical) occupy residues 37 to 57 (LAMTVMIPVGIVTLCVLLYAI), 69 to 89 (FYIILSVFAIFMTILVVSDNY), 90 to 110 (IMMFIGWEFVGVISYLLISFW), 133 to 153 (FFMLALGIFLSYFHAVDFDTL), 155 to 175 (LAAPYTNTLILNILSLLLLLA), 197 to 217 (TPVSALLHAATMVCAGVYVLV), 230 to 250 (LIGICWLGGVTTLVSGLIAIV), 257 to 275 (VIALSTMSQLSIMVLAIGI), 287 to 307 (CHAFFKALLFMGAGSVIHSYI), 323 to 343 (LPFSYTAILIASLSLMAIPGL), 366 to 388 (ILYYMAVGSATLTSLYSIRVLYL), 406 to 426 (ENIRMLIPMIILVIYSIFIGF), 454 to 474 (WYIKLLPLILGLSLSLLLVYI), 494 to 516 (IYYDQLLNNVIIRKTLIFGGYLN), and 534 to 554 (RALTYINIGIFLNLLYLFFFY).

It belongs to the complex I subunit 5 family.

The protein resides in the mitochondrion inner membrane. It carries out the reaction a ubiquinone + NADH + 5 H(+)(in) = a ubiquinol + NAD(+) + 4 H(+)(out). Its function is as follows. Core subunit of the mitochondrial membrane respiratory chain NADH dehydrogenase (Complex I) that is believed to belong to the minimal assembly required for catalysis. Complex I functions in the transfer of electrons from NADH to the respiratory chain. The immediate electron acceptor for the enzyme is believed to be ubiquinone. The sequence is that of NADH-ubiquinone oxidoreductase chain 5 (ND5) from Candida parapsilosis (Yeast).